A 289-amino-acid chain; its full sequence is Thioredoxin-like protein 1 (289 aa).

The 108-residue stretch at Val2–Asn109 folds into the Thioredoxin domain. Cys34 and Cys37 are oxidised to a cystine. The residue at position 113 (Ser113) is a Phosphoserine. Residues Glu115–Lys285 form the PITH domain.

As to quaternary structure, component of the 19S regulatory cap of the 26S proteasome. Interacts with PSMD14/RPN11. Interacts with, and reduces EEF1A1.

It localises to the cytoplasm. It is found in the nucleus. In terms of biological role, active thioredoxin with a redox potential of about -250 mV. This chain is Thioredoxin-like protein 1 (Txnl1), found in Rattus norvegicus (Rat).